The following is a 314-amino-acid chain: DNA-directed RNA polymerase subunit alpha (314 aa).

The interval 1-228 is alpha N-terminal domain (alpha-NTD); the sequence is MIEIEKPKIE…EHLNIFVGLT (228 aa). The tract at residues 246 to 314 is alpha C-terminal domain (alpha-CTD); that stretch reads EKVLEMTIEE…ELGLGLRKDD (69 aa).

Belongs to the RNA polymerase alpha chain family. Homodimer. The RNAP catalytic core consists of 2 alpha, 1 beta, 1 beta' and 1 omega subunit. When a sigma factor is associated with the core the holoenzyme is formed, which can initiate transcription.

The enzyme catalyses RNA(n) + a ribonucleoside 5'-triphosphate = RNA(n+1) + diphosphate. In terms of biological role, DNA-dependent RNA polymerase catalyzes the transcription of DNA into RNA using the four ribonucleoside triphosphates as substrates. The protein is DNA-directed RNA polymerase subunit alpha of Bacillus cytotoxicus (strain DSM 22905 / CIP 110041 / 391-98 / NVH 391-98).